Here is a 288-residue protein sequence, read N- to C-terminus: Fe-S cluster assembly protein dre2 (288 aa).

The interval 1-127 (MSSSVLVLTS…LSRPNQVEAV (127 aa)) is N-terminal SAM-like domain. The interval 128-177 (PIKLSNKNGQSASKNKILDFLKSDKENLISGDDDQELIDEDELLDESAHD) is linker. [2Fe-2S] cluster-binding residues include C185, C196, C199, and C201. A fe-S binding site A region spans residues 185–201 (CKPEPGKKKRACKNCTC). 4 residues coordinate [4Fe-4S] cluster: C244, C247, C255, and C258. Short sequence motifs (cx2C motif) lie at residues 244–247 (CGNC) and 255–258 (CSGC). Residues 244-258 (CGNCYLGDAFRCSGC) form a fe-S binding site B region.

The protein belongs to the anamorsin family. In terms of assembly, monomer. Interacts with tah18. Interacts with tim40. The cofactor is [2Fe-2S] cluster. It depends on [4Fe-4S] cluster as a cofactor.

It is found in the cytoplasm. It localises to the mitochondrion intermembrane space. Functionally, component of the cytosolic iron-sulfur (Fe-S) protein assembly (CIA) machinery required for the maturation of extramitochondrial Fe-S proteins. Part of an electron transfer chain functioning in an early step of cytosolic Fe-S biogenesis, facilitating the de novo assembly of a [4Fe-4S] cluster on the scaffold complex cfd1-nbp35. Electrons are transferred to dre2 from NADPH via the FAD- and FMN-containing protein tah18. Tah18-dre2 are also required for the assembly of the diferric tyrosyl radical cofactor of ribonucleotide reductase (RNR), probably by providing electrons for reduction during radical cofactor maturation in the catalytic small subunit suc22. This is Fe-S cluster assembly protein dre2 from Schizosaccharomyces pombe (strain 972 / ATCC 24843) (Fission yeast).